The primary structure comprises 468 residues: DNA polymerase IV 1 (468 aa).

The UmuC domain occupies 6-188 (VLHLDMDAFF…LPVRRLWGIG (183 aa)). Residues Asp-10 and Asp-105 each contribute to the Mg(2+) site. The active site involves Glu-106.

It belongs to the DNA polymerase type-Y family. Monomer. The cofactor is Mg(2+).

The protein localises to the cytoplasm. The enzyme catalyses DNA(n) + a 2'-deoxyribonucleoside 5'-triphosphate = DNA(n+1) + diphosphate. In terms of biological role, poorly processive, error-prone DNA polymerase involved in untargeted mutagenesis. Copies undamaged DNA at stalled replication forks, which arise in vivo from mismatched or misaligned primer ends. These misaligned primers can be extended by PolIV. Exhibits no 3'-5' exonuclease (proofreading) activity. May be involved in translesional synthesis, in conjunction with the beta clamp from PolIII. In Mycobacterium tuberculosis (strain CDC 1551 / Oshkosh), this protein is DNA polymerase IV 1 (dinB1).